Here is a 184-residue protein sequence, read N- to C-terminus: MSDIIKDAEKKMGSAVDHAREEFAAIRTGRANPAMFNKLMVEYYGTPTPLQQLASFQVPEARTVLIAPFDKSCVNDVEKAIRDSDLGVNPSNDGNVVRCVLPALTEERRKEYIKMAKTKAEEGRIAVRNVRRASNDVVKKQEKDKEISEDEMTRLEKELDQVTRKYVEQIDELLKSKESELLEI.

It belongs to the RRF family.

The protein localises to the cytoplasm. Functionally, responsible for the release of ribosomes from messenger RNA at the termination of protein biosynthesis. May increase the efficiency of translation by recycling ribosomes from one round of translation to another. The chain is Ribosome-recycling factor from Cutibacterium acnes (strain DSM 16379 / KPA171202) (Propionibacterium acnes).